The sequence spans 513 residues: Light-independent protochlorophyllide reductase subunit B (513 aa).

Asp-36 contributes to the [4Fe-4S] cluster binding site. The Proton donor role is filled by Asp-299. 434 to 435 contributes to the substrate binding site; it reads GM.

This sequence belongs to the ChlB/BchB/BchZ family. As to quaternary structure, protochlorophyllide reductase is composed of three subunits; ChlL, ChlN and ChlB. Forms a heterotetramer of two ChlB and two ChlN subunits. Requires [4Fe-4S] cluster as cofactor.

Its subcellular location is the plastid. The protein resides in the chloroplast. It catalyses the reaction chlorophyllide a + oxidized 2[4Fe-4S]-[ferredoxin] + 2 ADP + 2 phosphate = protochlorophyllide a + reduced 2[4Fe-4S]-[ferredoxin] + 2 ATP + 2 H2O. It functions in the pathway porphyrin-containing compound metabolism; chlorophyll biosynthesis (light-independent). Its function is as follows. Component of the dark-operative protochlorophyllide reductase (DPOR) that uses Mg-ATP and reduced ferredoxin to reduce ring D of protochlorophyllide (Pchlide) to form chlorophyllide a (Chlide). This reaction is light-independent. The NB-protein (ChlN-ChlB) is the catalytic component of the complex. This is Light-independent protochlorophyllide reductase subunit B from Zygnema circumcarinatum (Green alga).